A 554-amino-acid chain; its full sequence is Glutamine--tRNA ligase (554 aa).

A 'HIGH' region motif is present at residues 33 to 43 (PEPNGYLHIGH). ATP is bound by residues 34 to 36 (EPN) and 40 to 46 (HIGHAKS). Asp66 and Tyr210 together coordinate L-glutamine. Residues Thr229, 259-260 (RL), and 267-269 (MSK) contribute to the ATP site. A 'KMSKS' region motif is present at residues 266-270 (VMSKR).

This sequence belongs to the class-I aminoacyl-tRNA synthetase family. As to quaternary structure, monomer.

It localises to the cytoplasm. The catalysed reaction is tRNA(Gln) + L-glutamine + ATP = L-glutaminyl-tRNA(Gln) + AMP + diphosphate. This Clostridioides difficile (strain 630) (Peptoclostridium difficile) protein is Glutamine--tRNA ligase.